Consider the following 353-residue polypeptide: Glutamate 5-kinase (353 aa).

Lys-8 serves as a coordination point for ATP. 3 residues coordinate substrate: Ser-47, Asp-134, and Asn-146. An ATP-binding site is contributed by 198-204 (TGGIRSK). The PUA domain maps to 262 to 339 (AGKIYVNKGA…SDLKKILGYE (78 aa)).

This sequence belongs to the glutamate 5-kinase family.

It localises to the cytoplasm. It catalyses the reaction L-glutamate + ATP = L-glutamyl 5-phosphate + ADP. It functions in the pathway amino-acid biosynthesis; L-proline biosynthesis; L-glutamate 5-semialdehyde from L-glutamate: step 1/2. Catalyzes the transfer of a phosphate group to glutamate to form L-glutamate 5-phosphate. The polypeptide is Glutamate 5-kinase (Thermotoga maritima (strain ATCC 43589 / DSM 3109 / JCM 10099 / NBRC 100826 / MSB8)).